Here is a 299-residue protein sequence, read N- to C-terminus: 4-hydroxybenzoate octaprenyltransferase (299 aa).

Helical transmembrane passes span 34 to 54 (IGSL…ADGL), 57 to 77 (LWTL…GCVI), 108 to 128 (LWVF…LNWL), 163 to 183 (WGIP…GWLL), 221 to 241 (FDLV…ALVD), 245 to 265 (DLGA…AYEF), and 277 to 297 (FRAF…IAVA).

It belongs to the UbiA prenyltransferase family. It depends on Mg(2+) as a cofactor.

It is found in the cell inner membrane. It catalyses the reaction all-trans-octaprenyl diphosphate + 4-hydroxybenzoate = 4-hydroxy-3-(all-trans-octaprenyl)benzoate + diphosphate. Its pathway is cofactor biosynthesis; ubiquinone biosynthesis. Functionally, catalyzes the prenylation of para-hydroxybenzoate (PHB) with an all-trans polyprenyl group. Mediates the second step in the final reaction sequence of ubiquinone-8 (UQ-8) biosynthesis, which is the condensation of the polyisoprenoid side chain with PHB, generating the first membrane-bound Q intermediate 3-octaprenyl-4-hydroxybenzoate. This chain is 4-hydroxybenzoate octaprenyltransferase, found in Xanthomonas oryzae pv. oryzae (strain MAFF 311018).